A 209-amino-acid polypeptide reads, in one-letter code: 3-demethoxyubiquinol 3-hydroxylase (209 aa).

Residues Glu58, Glu88, His91, Glu140, Glu172, and His175 each contribute to the Fe cation site.

This sequence belongs to the COQ7 family. Fe cation serves as cofactor.

Its subcellular location is the cell membrane. It catalyses the reaction a 5-methoxy-2-methyl-3-(all-trans-polyprenyl)benzene-1,4-diol + AH2 + O2 = a 3-demethylubiquinol + A + H2O. The protein operates within cofactor biosynthesis; ubiquinone biosynthesis. Functionally, catalyzes the hydroxylation of 2-nonaprenyl-3-methyl-6-methoxy-1,4-benzoquinol during ubiquinone biosynthesis. In Polynucleobacter asymbioticus (strain DSM 18221 / CIP 109841 / QLW-P1DMWA-1) (Polynucleobacter necessarius subsp. asymbioticus), this protein is 3-demethoxyubiquinol 3-hydroxylase.